Reading from the N-terminus, the 485-residue chain is Probable protein phosphatase 2C 3 (485 aa).

The span at 1 to 11 (MSSPSPSSEAA) shows a compositional bias: low complexity. Disordered stretches follow at residues 1–29 (MSSP…AAGG) and 43–72 (ARAE…AEGG). The segment covering 13–23 (AHHHHHQRRQH) has biased composition (basic residues). Residues 107–353 (SSSSSSSLAS…DDTTCIVVDM (247 aa)) enclose the PPM-type phosphatase domain. Mn(2+) is bound by residues D129, G130, D305, and D344.

This sequence belongs to the PP2C family. The cofactor is Mg(2+). Mn(2+) serves as cofactor.

It catalyses the reaction O-phospho-L-seryl-[protein] + H2O = L-seryl-[protein] + phosphate. The catalysed reaction is O-phospho-L-threonyl-[protein] + H2O = L-threonyl-[protein] + phosphate. The sequence is that of Probable protein phosphatase 2C 3 from Oryza sativa subsp. japonica (Rice).